Here is a 140-residue protein sequence, read N- to C-terminus: Myrosinase 2 (140 aa).

Arg70 acts as the Nucleophile in catalysis. Residues Asn114 and Asn127 are each glycosylated (N-linked (GlcNAc...) asparagine).

The protein belongs to the glycosyl hydrolase 1 family. Homodimer.

The catalysed reaction is a thioglucoside + H2O = a sugar + a thiol.. With respect to regulation, inhibited by ascorbate. Its function is as follows. Degradation of glucosinolates (glucose residue linked by a thioglucoside bound to an amino acid derivative) to glucose, sulfate and any of the products: thiocyanates, isothiocyanates, nitriles, epithionitriles or oxazolidine-2-thiones. This is Myrosinase 2 from Brevicoryne brassicae (Mealy cabbage aphid).